Reading from the N-terminus, the 249-residue chain is Aspartate/glutamate leucyltransferase (249 aa).

Belongs to the R-transferase family. Bpt subfamily.

It is found in the cytoplasm. It catalyses the reaction N-terminal L-glutamyl-[protein] + L-leucyl-tRNA(Leu) = N-terminal L-leucyl-L-glutamyl-[protein] + tRNA(Leu) + H(+). It carries out the reaction N-terminal L-aspartyl-[protein] + L-leucyl-tRNA(Leu) = N-terminal L-leucyl-L-aspartyl-[protein] + tRNA(Leu) + H(+). In terms of biological role, functions in the N-end rule pathway of protein degradation where it conjugates Leu from its aminoacyl-tRNA to the N-termini of proteins containing an N-terminal aspartate or glutamate. This Brucella abortus (strain S19) protein is Aspartate/glutamate leucyltransferase.